The chain runs to 149 residues: Endothelin-1 (149 aa).

Positions 1–33 are excised as a propeptide; it reads AAETVVSGAELSLTANSGGEKTPPHAPGLLRRS. The segment at 6–26 is disordered; the sequence is VSGAELSLTANSGGEKTPPHA. Intrachain disulfides connect Cys-36–Cys-50 and Cys-38–Cys-46. Residues 57 to 149 constitute a propeptide that is removed on maturation; it reads VNTPGHIAPY…ISQQLGNGKK (93 aa). Residues 93–107 are endothelin-like; the sequence is CQCANQKDKKCWNFC.

The protein belongs to the endothelin/sarafotoxin family.

The protein localises to the secreted. In terms of biological role, endothelins are endothelium-derived vasoconstrictor peptides. Probable ligand for G-protein coupled receptors EDNRA and EDNRB which activates PTK2B, BCAR1, BCAR3 and, GTPases RAP1 and RHOA cascade in glomerular mesangial cells. Also binds the DEAR/FBXW7-AS1 receptor. Promotes mesenteric arterial wall remodeling via activation of ROCK signaling and subsequent colocalization of NFATC3 with F-actin filaments. NFATC3 then translocates to the nucleus where it subsequently promotes the transcription of the smooth muscle hypertrophy and differentiation marker ACTA2. The polypeptide is Endothelin-1 (EDN1) (Cavia porcellus (Guinea pig)).